A 138-amino-acid chain; its full sequence is Cellular retinoic acid-binding protein 2 (138 aa).

The Nuclear localization signal signature appears at 21–31; it reads KVLGVNVMLRK. A Glycyl lysine isopeptide (Lys-Gly) (interchain with G-Cter in SUMO) cross-link involves residue lysine 102. Residue 133-135 coordinates all-trans-retinoate; the sequence is RVY.

This sequence belongs to the calycin superfamily. Fatty-acid binding protein (FABP) family. Interacts with RXR and RARA. Interacts with importin alpha. In terms of processing, sumoylated in response to retinoic acid binding, sumoylation is critical for dissociation from ER and subsequent nuclear translocation.

Its subcellular location is the cytoplasm. It is found in the endoplasmic reticulum. The protein resides in the nucleus. In terms of biological role, transports retinoic acid to the nucleus. Regulates the access of retinoic acid to the nuclear retinoic acid receptors. This Homo sapiens (Human) protein is Cellular retinoic acid-binding protein 2 (CRABP2).